The chain runs to 141 residues: Large-conductance mechanosensitive channel (141 aa).

The next 2 membrane-spanning stretches (helical) occupy residues 16-36 (VIDLAVGVIIGAAFGKIVDSL) and 86-106 (GNFITVAVNFLILAFIVFLMV).

It belongs to the MscL family. As to quaternary structure, homopentamer.

It localises to the cell inner membrane. Functionally, channel that opens in response to stretch forces in the membrane lipid bilayer. May participate in the regulation of osmotic pressure changes within the cell. This Ralstonia nicotianae (strain ATCC BAA-1114 / GMI1000) (Ralstonia solanacearum) protein is Large-conductance mechanosensitive channel.